A 238-amino-acid chain; its full sequence is Sugar fermentation stimulation protein homolog (238 aa).

This sequence belongs to the SfsA family.

The protein is Sugar fermentation stimulation protein homolog of Pseudomonas entomophila (strain L48).